We begin with the raw amino-acid sequence, 359 residues long: Sulfate/thiosulfate import ATP-binding protein CysA (359 aa).

The ABC transporter domain maps to 3-237 (VRVAGVRKEF…PNSPFVYGFI (235 aa)). 35–42 (GPSGSGKT) provides a ligand contact to ATP.

It belongs to the ABC transporter superfamily. Sulfate/tungstate importer (TC 3.A.1.6) family. The complex is composed of two ATP-binding proteins (CysA), two transmembrane proteins (CysT and CysW) and a solute-binding protein (CysP).

It is found in the cell inner membrane. The catalysed reaction is sulfate(out) + ATP + H2O = sulfate(in) + ADP + phosphate + H(+). It carries out the reaction thiosulfate(out) + ATP + H2O = thiosulfate(in) + ADP + phosphate + H(+). Part of the ABC transporter complex CysAWTP involved in sulfate/thiosulfate import. Responsible for energy coupling to the transport system. The chain is Sulfate/thiosulfate import ATP-binding protein CysA from Brucella melitensis biotype 1 (strain ATCC 23456 / CCUG 17765 / NCTC 10094 / 16M).